The chain runs to 469 residues: 3-isopropylmalate dehydratase large subunit (469 aa).

C347, C407, and C410 together coordinate [4Fe-4S] cluster.

Belongs to the aconitase/IPM isomerase family. LeuC type 1 subfamily. As to quaternary structure, heterodimer of LeuC and LeuD. Requires [4Fe-4S] cluster as cofactor.

It catalyses the reaction (2R,3S)-3-isopropylmalate = (2S)-2-isopropylmalate. It functions in the pathway amino-acid biosynthesis; L-leucine biosynthesis; L-leucine from 3-methyl-2-oxobutanoate: step 2/4. Functionally, catalyzes the isomerization between 2-isopropylmalate and 3-isopropylmalate, via the formation of 2-isopropylmaleate. In Prochlorococcus marinus (strain NATL2A), this protein is 3-isopropylmalate dehydratase large subunit.